A 455-amino-acid chain; its full sequence is 2-succinylbenzoate--CoA ligase (455 aa).

Belongs to the ATP-dependent AMP-binding enzyme family. MenE subfamily.

It catalyses the reaction 2-succinylbenzoate + ATP + CoA = 2-succinylbenzoyl-CoA + AMP + diphosphate. It functions in the pathway quinol/quinone metabolism; 1,4-dihydroxy-2-naphthoate biosynthesis; 1,4-dihydroxy-2-naphthoate from chorismate: step 5/7. It participates in quinol/quinone metabolism; menaquinone biosynthesis. Converts 2-succinylbenzoate (OSB) to 2-succinylbenzoyl-CoA (OSB-CoA). The protein is 2-succinylbenzoate--CoA ligase of Salmonella typhimurium (strain LT2 / SGSC1412 / ATCC 700720).